A 230-amino-acid polypeptide reads, in one-letter code: MSEEVVESSSQEASQVIPQEQEDWADDVVTTMPAQEVTEWPEIKLFGRWACDDISISDISLQDYIAVKEKFARYLPHSAGRYAAKRFRKAQCPIVERLTSGLMMKGRSNGKKLLACRIVKHAFEIIHLLTSENPLQVTVNAIVNSGPREDSTRIGRAGTVRRQAVDVSPLRRVNQAIWLICTGAREAAFRNIKTVAECLADELINAAKGSSNSYAIKKKDELERVAKSNR.

Residues 1-22 (MSEEVVESSSQEASQVIPQEQE) are disordered. Residues 7–16 (ESSSQEASQV) are compositionally biased toward low complexity.

This sequence belongs to the universal ribosomal protein uS7 family.

In Drosophila melanogaster (Fruit fly), this protein is Small ribosomal subunit protein uS7B (RpS5b).